Here is a 341-residue protein sequence, read N- to C-terminus: LRP2-binding protein (341 aa).

Residues V56–A89 form a TPR repeat. Sel1-like repeat units follow at residues L90–C122, Y130–N165, L170–S203, L204–N239, V240–N271, and A291–A326.

It is found in the cytoplasm. In terms of biological role, may act as an adapter that regulates LRP2 function. The sequence is that of LRP2-binding protein (lrp2bp) from Xenopus laevis (African clawed frog).